The primary structure comprises 55 residues: Large ribosomal subunit protein bL33 (55 aa).

This sequence belongs to the bacterial ribosomal protein bL33 family.

The chain is Large ribosomal subunit protein bL33 from Acidiphilium cryptum (strain JF-5).